The following is a 193-amino-acid chain: dTTP/UTP pyrophosphatase (193 aa).

Catalysis depends on Asp-77, which acts as the Proton acceptor.

Belongs to the Maf family. YhdE subfamily. A divalent metal cation serves as cofactor.

It is found in the cytoplasm. It carries out the reaction dTTP + H2O = dTMP + diphosphate + H(+). The enzyme catalyses UTP + H2O = UMP + diphosphate + H(+). Nucleoside triphosphate pyrophosphatase that hydrolyzes dTTP and UTP. May have a dual role in cell division arrest and in preventing the incorporation of modified nucleotides into cellular nucleic acids. In Bacteroides fragilis (strain YCH46), this protein is dTTP/UTP pyrophosphatase.